Consider the following 84-residue polypeptide: Small ribosomal subunit protein uS17 (84 aa).

Belongs to the universal ribosomal protein uS17 family. Part of the 30S ribosomal subunit.

Functionally, one of the primary rRNA binding proteins, it binds specifically to the 5'-end of 16S ribosomal RNA. In Borrelia duttonii (strain Ly), this protein is Small ribosomal subunit protein uS17.